The following is a 314-amino-acid chain: Polyadenylate-binding protein-interacting protein 8 (314 aa).

The segment at 1–47 (MAAITEMATDSNDVINDGGTGDGIEKSTDSKPEIESDDLKPKSKPEY) is disordered. The span at 23-47 (GIEKSTDSKPEIESDDLKPKSKPEY) shows a compositional bias: basic and acidic residues. A PAM2-like motif is present at residues 59–69 (KLNPEAKEFFP). The Bipartite nuclear localization signal motif lies at 99–112 (RRRRNNYNQGRRVR). RRM domains lie at 128–203 (RTVY…PSKT) and 225–301 (RTIY…PSKT).

Interacts with MPC. Expressed in cauline leaves, stems, rosette leaves, immature siliques and primary inflorescences but at a low level.

It is found in the nucleus. The protein is Polyadenylate-binding protein-interacting protein 8 (CID8) of Arabidopsis thaliana (Mouse-ear cress).